The primary structure comprises 283 residues: tRNA (guanine-N(1)-)-methyltransferase (283 aa).

S-adenosyl-L-methionine-binding positions include G113 and I133–L138.

The protein belongs to the RNA methyltransferase TrmD family. In terms of assembly, homodimer.

Its subcellular location is the cytoplasm. It carries out the reaction guanosine(37) in tRNA + S-adenosyl-L-methionine = N(1)-methylguanosine(37) in tRNA + S-adenosyl-L-homocysteine + H(+). In terms of biological role, specifically methylates guanosine-37 in various tRNAs. The polypeptide is tRNA (guanine-N(1)-)-methyltransferase (Parafrankia sp. (strain EAN1pec)).